Consider the following 324-residue polypeptide: tRNA dimethylallyltransferase (324 aa).

15-22 (GPTATGKS) contributes to the ATP binding site. A substrate-binding site is contributed by 17-22 (TATGKS). An interaction with substrate tRNA region spans residues 40-43 (DSAQ).

The protein belongs to the IPP transferase family. Monomer. The cofactor is Mg(2+).

The enzyme catalyses adenosine(37) in tRNA + dimethylallyl diphosphate = N(6)-dimethylallyladenosine(37) in tRNA + diphosphate. In terms of biological role, catalyzes the transfer of a dimethylallyl group onto the adenine at position 37 in tRNAs that read codons beginning with uridine, leading to the formation of N6-(dimethylallyl)adenosine (i(6)A). The sequence is that of tRNA dimethylallyltransferase from Moorella thermoacetica (strain ATCC 39073 / JCM 9320).